Reading from the N-terminus, the 313-residue chain is Mitochondrial uncoupling protein 4 (313 aa).

3 Solcar repeats span residues 4–115, 124–215, and 224–309; these read KSFV…LKNK, LNLS…FKEG, and DGLG…VRKL. 6 helical membrane passes run 6–26, 84–104, 130–150, 189–209, 230–250, and 282–302; these read FVEG…LDLI, AAAL…YSTT, IGAG…ADVA, RGSA…LASY, VVAS…VDVI, and YKGF…LFVT.

Belongs to the mitochondrial carrier (TC 2.A.29) family. In terms of tissue distribution, expressed in roots, leaves, stems and flowers.

It is found in the mitochondrion inner membrane. Functionally, PUMPS are mitochondrial transporter proteins that create proton leaks across the inner mitochondrial membrane, thus uncoupling oxidative phosphorylation. This leads to a decrease in the efficiency of oxidative phosphorylation and an increase in heat production. May be involved in protecting plant cells against oxidative stress damage. Recombinant PUMP4, reconstituted into liposomes, transports a wide range of dicarboxylic acids including malate, oxaloacetate and succinate as well as phosphate, sulfate and thiosulfate. However, it is unknown if these transports are of any biological significance in vivo. This is Mitochondrial uncoupling protein 4 (PUMP4) from Arabidopsis thaliana (Mouse-ear cress).